Consider the following 488-residue polypeptide: Transmembrane protein 39A (488 aa).

Asparagine 31 and asparagine 39 each carry an N-linked (GlcNAc...) asparagine glycan. Transmembrane regions (helical) follow at residues 72-92 (GLLF…IQYI), 110-130 (TSLN…VMLA), and 155-175 (LITA…WTLV). Residue asparagine 180 is glycosylated (N-linked (GlcNAc...) asparagine). Transmembrane regions (helical) follow at residues 182 to 202 (SVLN…LCCF), 287 to 307 (EVLF…LCFV), 319 to 339 (CEHL…QLLP), 420 to 440 (LLNL…YSLL), and 446 to 466 (NHTL…FKLL).

It belongs to the TMEM39 family.

The protein resides in the endoplasmic reticulum membrane. Regulates autophagy by controlling the spatial distribution and levels of the intracellular phosphatidylinositol 4-phosphate (PtdIns(4)P) pools. Modulates (PtdIns(4)P) levels by regulating the ER-to-Golgi trafficking of the phosphatidylinositide phosphatase SACM1L. The chain is Transmembrane protein 39A (tmem39a) from Xenopus tropicalis (Western clawed frog).